Consider the following 380-residue polypeptide: tRNA(Met) cytidine acetate ligase (380 aa).

ATP contacts are provided by residues 7 to 20, Gly101, Asn151, and Arg176; that span reads IAEY…HLYQ.

It belongs to the TmcAL family.

It is found in the cytoplasm. The catalysed reaction is cytidine(34) in elongator tRNA(Met) + acetate + ATP = N(4)-acetylcytidine(34) in elongator tRNA(Met) + AMP + diphosphate. Catalyzes the formation of N(4)-acetylcytidine (ac(4)C) at the wobble position of elongator tRNA(Met), using acetate and ATP as substrates. First activates an acetate ion to form acetyladenylate (Ac-AMP) and then transfers the acetyl group to tRNA to form ac(4)C34. This Ligilactobacillus salivarius (strain UCC118) (Lactobacillus salivarius) protein is tRNA(Met) cytidine acetate ligase.